The primary structure comprises 1216 residues: AF4/FMR2 family member 1 (1216 aa).

6 disordered regions span residues 1–52 (MAAH…KGDE), 68–104 (KEFL…GAAS), 116–139 (IHTS…AQPR), 152–217 (PRLT…VSSK), 244–275 (AVTS…MQQK), and 352–728 (SWPP…RTSG). 2 stretches are compositionally biased toward basic and acidic residues: residues 9 to 35 (NEDR…EAFP) and 78 to 99 (HRLD…HDRG). The segment covering 166-182 (RKCDRRAEGDSAPERKL) has biased composition (basic and acidic residues). Phosphoserine occurs at positions 183, 191, and 197. Low complexity predominate over residues 207-217 (SKAHSSGVSSK). A compositionally biased stretch (pro residues) spans 252–266 (PPQPPCQTFPPPPLP). Over residues 383 to 406 (PATQSQKQYDTPSKTHPNPQQGTS) the composition is skewed to polar residues. The span at 408-424 (LEDDLQLSDSEDSDTEQ) shows a compositional bias: acidic residues. A compositionally biased stretch (pro residues) spans 429 to 438 (PPSPPAPPSA). Residues 457-484 (ESSESDSSSDSESESSSSDSEEEEENEP) are compositionally biased toward acidic residues. N6-acetyllysine is present on K682. The segment covering 710–728 (SQGPSHSSRGSSGSVRTSG) has biased composition (low complexity). A phosphoserine mark is found at S755 and S760. Disordered regions lie at residues 777-969 (RIPQ…RQQA) and 1094-1125 (APSP…QSSA). The segment covering 789–808 (RKAEDKQLSAGKKQDSETKS) has biased composition (basic and acidic residues). Low complexity-rich tracts occupy residues 824 to 846 (KKST…SSHT), 867 to 886 (PPAS…PSRP), 902 to 915 (PPRS…SSTD), and 1115 to 1125 (PASSVGSQSSA).

It belongs to the AF4 family. Component of the super elongation complex (SEC), at least composed of EAF1, EAF2, CDK9, MLLT3/AF9, AFF (AFF1 or AFF4), the P-TEFb complex and ELL (ELL, ELL2 or ELL3).

It is found in the nucleus. The protein is AF4/FMR2 family member 1 (Aff1) of Mus musculus (Mouse).